The chain runs to 129 residues: Ig lambda-1 chain V region S43 (129 aa).

The first 19 residues, 1–19 (MAWISLILSLLALSSGAIS), serve as a signal peptide directing secretion. Position 20 is a pyrrolidone carboxylic acid (Gln-20). One can recognise an Ig-like domain in the interval 20 to 125 (QAVVTQESAL…HWVFGGGTKL (106 aa)).

This is Ig lambda-1 chain V region S43 from Mus musculus (Mouse).